The chain runs to 390 residues: Alanine racemase (390 aa).

K37 acts as the Proton acceptor; specific for D-alanine in catalysis. K37 carries the post-translational modification N6-(pyridoxal phosphate)lysine. R135 serves as a coordination point for substrate. Residue Y274 is the Proton acceptor; specific for L-alanine of the active site. M322 is a binding site for substrate.

It belongs to the alanine racemase family. Pyridoxal 5'-phosphate serves as cofactor.

It carries out the reaction L-alanine = D-alanine. It functions in the pathway amino-acid biosynthesis; D-alanine biosynthesis; D-alanine from L-alanine: step 1/1. Its function is as follows. Catalyzes the interconversion of L-alanine and D-alanine. May also act on other amino acids. This Desulfosudis oleivorans (strain DSM 6200 / JCM 39069 / Hxd3) (Desulfococcus oleovorans) protein is Alanine racemase (alr).